The chain runs to 87 residues: uncharacterized protein (87 aa).

An N-terminal signal peptide occupies residues 1–19; it reads MLVLQLAVLVTAVYAFVHA. A helical transmembrane segment spans residues 51–71; the sequence is ILGFVFGVLGIVIAACAAGVY.

The protein to M.tuberculosis Rv0476.

Its subcellular location is the membrane. This is an uncharacterized protein from Mycobacterium leprae (strain TN).